Consider the following 436-residue polypeptide: Glucose-1-phosphate adenylyltransferase (436 aa).

Alpha-D-glucose 1-phosphate-binding positions include Tyr-112, Gly-178, 193-194, and Ser-211; that span reads EK.

The protein belongs to the bacterial/plant glucose-1-phosphate adenylyltransferase family. Homotetramer.

It carries out the reaction alpha-D-glucose 1-phosphate + ATP + H(+) = ADP-alpha-D-glucose + diphosphate. It participates in glycan biosynthesis; glycogen biosynthesis. Involved in the biosynthesis of ADP-glucose, a building block required for the elongation reactions to produce glycogen. Catalyzes the reaction between ATP and alpha-D-glucose 1-phosphate (G1P) to produce pyrophosphate and ADP-Glc. The protein is Glucose-1-phosphate adenylyltransferase of Histophilus somni (strain 129Pt) (Haemophilus somnus).